The chain runs to 215 residues: MRIFIDTANVEEIKAANDLGIIAGVTTNPSLIAREGRNFREIVEEIAAIVDGPISAEVVSTTAPEMVAEGVELAAIHPNIVIKIPMIAEGLKAVKELSARGIKTNVTLVFSANQALLAALAGATYVSPFVGRLDDISHDGLQVIADIVPIFAQYGFKTQIIAASIRHPLHVLEAARLGADIATVPFKVLMQMLKHPLTDTGLARFLADWEKVKNK.

The Schiff-base intermediate with substrate role is filled by Lys83.

Belongs to the transaldolase family. Type 3B subfamily.

It is found in the cytoplasm. It carries out the reaction D-sedoheptulose 7-phosphate + D-glyceraldehyde 3-phosphate = D-erythrose 4-phosphate + beta-D-fructose 6-phosphate. It participates in carbohydrate degradation; pentose phosphate pathway; D-glyceraldehyde 3-phosphate and beta-D-fructose 6-phosphate from D-ribose 5-phosphate and D-xylulose 5-phosphate (non-oxidative stage): step 2/3. In terms of biological role, transaldolase is important for the balance of metabolites in the pentose-phosphate pathway. The polypeptide is Probable transaldolase (Moorella thermoacetica (strain ATCC 39073 / JCM 9320)).